The chain runs to 311 residues: Mediator of RNA polymerase II transcription subunit 27 (311 aa).

Phosphoserine is present on serine 132. N6-methyllysine is present on lysine 134.

It belongs to the Mediator complex subunit 27 family. As to quaternary structure, component of the Mediator complex, which is composed of MED1, MED4, MED6, MED7, MED8, MED9, MED10, MED11, MED12, MED13, MED13L, MED14, MED15, MED16, MED17, MED18, MED19, MED20, MED21, MED22, MED23, MED24, MED25, MED26, MED27, MED29, MED30, MED31, CCNC, CDK8 and CDC2L6/CDK11. The MED12, MED13, CCNC and CDK8 subunits form a distinct module termed the CDK8 module. Mediator containing the CDK8 module is less active than Mediator lacking this module in supporting transcriptional activation. Individual preparations of the Mediator complex lacking one or more distinct subunits have been variously termed ARC, CRSP, DRIP, PC2, SMCC and TRAP.

It localises to the nucleus. In terms of biological role, component of the Mediator complex, a coactivator involved in the regulated transcription of nearly all RNA polymerase II-dependent genes. Mediator functions as a bridge to convey information from gene-specific regulatory proteins to the basal RNA polymerase II transcription machinery. Mediator is recruited to promoters by direct interactions with regulatory proteins and serves as a scaffold for the assembly of a functional preinitiation complex with RNA polymerase II and the general transcription factors. In Bos taurus (Bovine), this protein is Mediator of RNA polymerase II transcription subunit 27 (MED27).